The sequence spans 390 residues: Transforming protein cbl (390 aa).

The disordered stretch occupies residues Ala1 to Gly52. Over residues Gly42–Gly52 the composition is skewed to gly residues. The interval Pro77–Gln205 is 4H. In terms of domain architecture, Cbl-PTB spans Pro77 to Gly381. Residues Gly206–Phe278 are EF-hand-like. Ca(2+)-binding residues include Asp259, Thr261, Asn263, Tyr265, and Glu270. The interval Gln279–Gly381 is SH2-like. Position 324 (Arg324) interacts with 4-O-phospho-L-tyrosine.

Its function is as follows. Induces early B-lineage lymphomas. In Mus musculus (Mouse), this protein is Transforming protein cbl (V-CBL).